A 444-amino-acid chain; its full sequence is Ubiquitin carboxyl-terminal hydrolase MINDY-3 (444 aa).

The Nucleophile role is filled by cysteine 51. Phosphoserine is present on serine 124. Catalysis depends on histidine 286, which acts as the Proton acceptor.

It belongs to the MINDY deubiquitinase family. FAM188 subfamily. Interacts with COPS5.

Its subcellular location is the nucleus. The catalysed reaction is Thiol-dependent hydrolysis of ester, thioester, amide, peptide and isopeptide bonds formed by the C-terminal Gly of ubiquitin (a 76-residue protein attached to proteins as an intracellular targeting signal).. Its function is as follows. Hydrolase that can remove 'Lys-48'-linked conjugated ubiquitin from proteins. In Mus musculus (Mouse), this protein is Ubiquitin carboxyl-terminal hydrolase MINDY-3.